The primary structure comprises 233 residues: Large ribosomal subunit protein eL6y (233 aa).

The span at 48–72 (HDAKSKVDAPVEKPPKFYPAEDVKK) shows a compositional bias: basic and acidic residues. Positions 48–82 (HDAKSKVDAPVEKPPKFYPAEDVKKPLPNRRTAKP) are disordered.

It belongs to the eukaryotic ribosomal protein eL6 family.

The polypeptide is Large ribosomal subunit protein eL6y (RPL6B) (Arabidopsis thaliana (Mouse-ear cress)).